The chain runs to 87 residues: Small ribosomal subunit protein uS19 (87 aa).

The protein belongs to the universal ribosomal protein uS19 family.

Its function is as follows. Protein S19 forms a complex with S13 that binds strongly to the 16S ribosomal RNA. This is Small ribosomal subunit protein uS19 (rpsS) from Mycoplasma genitalium (strain ATCC 33530 / DSM 19775 / NCTC 10195 / G37) (Mycoplasmoides genitalium).